Here is a 156-residue protein sequence, read N- to C-terminus: Ribosome maturation factor RimP (156 aa).

It belongs to the RimP family.

Its subcellular location is the cytoplasm. In terms of biological role, required for maturation of 30S ribosomal subunits. The sequence is that of Ribosome maturation factor RimP from Gloeobacter violaceus (strain ATCC 29082 / PCC 7421).